The following is a 724-amino-acid chain: Probable zinc transporter MSC2 (724 aa).

Residues 1–6 lie on the Cytoplasmic side of the membrane; sequence MNLQEL. The helical transmembrane segment at 7-27 threads the bilayer; the sequence is LAKVPLLLSYPTIILSSNLIV. At 28–58 the chain is on the lumenal side; the sequence is PSHNDLISRAASTSAAEYADEKLIFFSTDHA. A helical membrane pass occupies residues 59–79; that stretch reads IRLIFLPTFVASSFNLFAHYF. Residues 80-90 are Cytoplasmic-facing; that stretch reads NFINYSSRRKY. A helical transmembrane segment spans residues 91-111; it reads YVLFTAIYFLSILTAIFHPIQ. Residues 112 to 134 lie on the Lumenal side of the membrane; sequence STCITLLIIKLLTTADESSPKIA. A helical transmembrane segment spans residues 135 to 155; the sequence is LNFKTILKTFVPFITLTLVIL. Over 156 to 174 the chain is Cytoplasmic; that stretch reads RWDPSFDASSGDVNKISTS. A helical transmembrane segment spans residues 175–195; the sequence is LAAYALLILTLRYASPLILST. Over 196 to 219 the chain is Lumenal; sequence LSSSIGVVSKDTSVAQHSISRNKR. A helical transmembrane segment spans residues 220–240; it reads FPLILVLPIFSFVLLYLMTIV. At 241-244 the chain is on the cytoplasmic side; the sequence is NKTY. The chain crosses the membrane as a helical span at residues 245–265; it reads NIQLLMVFVFFGCLSIFFLSL. At 266–298 the chain is on the lumenal side; it reads KDLFTEDGNQKKGGQEDEYCRMFDIKYMISYLW. The chain crosses the membrane as a helical span at residues 299 to 319; sequence LTRFTILLTGIMAIVVHFLSF. At 320 to 386 the chain is on the cytoplasmic side; the sequence is NEITSSIKTD…KQMALNKDTR (67 aa). A helical transmembrane segment spans residues 387–407; it reads SIFSFLLLNTAFMFVQLLYSF. At 408-417 the chain is on the lumenal side; that stretch reads RSKSLGLLSD. A helical transmembrane segment spans residues 418 to 438; it reads SLHMALDCTSLLLGLIAGVLT. Residues 439-453 lie on the Cytoplasmic side of the membrane; sequence KKPASDKFPFGLNYL. A helical membrane pass occupies residues 454-474; that stretch reads GTLAGFTNGVLLLGIVCGIFV. At 475–491 the chain is on the lumenal side; that stretch reads EAIERIFNPIHLHATNE. A helical membrane pass occupies residues 492 to 512; sequence LLVVATLGLLVNLVGLFAFDH. The Cytoplasmic segment spans residues 513–528; that stretch reads GAHDHGGTDNENMKGI. The helical transmembrane segment at 529–549 threads the bilayer; that stretch reads FLHILADTLGSVGVVISTLLI. The Lumenal portion of the chain corresponds to 550–563; the sequence is KLTHWPIFDPIASL. The chain crosses the membrane as a helical span at residues 564–584; that stretch reads LIGSLILLSALPLLKSTSANI. Topologically, residues 585 to 724 are cytoplasmic; it reads LLRLDDKKHN…NSLPLQPIAN (140 aa). The tract at residues 614-653 is disordered; that stretch reads TPRFWPTESGSSGHSHAHTHSHAENHSHEHHHDQKNGSQE. Over residues 634–648 the composition is skewed to basic and acidic residues; it reads SHAENHSHEHHHDQK.

It belongs to the cation diffusion facilitator (CDF) transporter (TC 2.A.4) family. SLC30A subfamily.

It localises to the endoplasmic reticulum membrane. The protein resides in the nucleus membrane. Its function is as follows. Probably act as a zinc ion transporter moving zinc from the nucleus/endoplasmic reticulum to the cytoplasm. Involved in zinc ion homeostasis and cellular distribution. The chain is Probable zinc transporter MSC2 (MSC2) from Saccharomyces cerevisiae (strain ATCC 204508 / S288c) (Baker's yeast).